Reading from the N-terminus, the 206-residue chain is Small ribosomal subunit protein uS4 (206 aa).

In terms of domain architecture, S4 RNA-binding spans Gly96–Lys156.

It belongs to the universal ribosomal protein uS4 family. In terms of assembly, part of the 30S ribosomal subunit. Contacts protein S5. The interaction surface between S4 and S5 is involved in control of translational fidelity.

Functionally, one of the primary rRNA binding proteins, it binds directly to 16S rRNA where it nucleates assembly of the body of the 30S subunit. In terms of biological role, with S5 and S12 plays an important role in translational accuracy. This Histophilus somni (strain 129Pt) (Haemophilus somnus) protein is Small ribosomal subunit protein uS4.